The chain runs to 290 residues: Ribosomal protein L11 methyltransferase (290 aa).

S-adenosyl-L-methionine-binding residues include Thr-135, Gly-158, Asp-180, and Asn-227.

It belongs to the methyltransferase superfamily. PrmA family.

Its subcellular location is the cytoplasm. It carries out the reaction L-lysyl-[protein] + 3 S-adenosyl-L-methionine = N(6),N(6),N(6)-trimethyl-L-lysyl-[protein] + 3 S-adenosyl-L-homocysteine + 3 H(+). Functionally, methylates ribosomal protein L11. The polypeptide is Ribosomal protein L11 methyltransferase (Chelativorans sp. (strain BNC1)).